A 467-amino-acid chain; its full sequence is Dimethylamine methyltransferase MtbB3 (467 aa).

Position 356 (pyrrolysine 356) is a non-standard amino acid, pyrrolysine.

Belongs to the dimethylamine methyltransferase family.

It catalyses the reaction Co(I)-[dimethylamine-specific corrinoid protein] + dimethylamine + H(+) = methyl-Co(III)-[dimethylamine-specific corrinoid protein] + methylamine. It participates in one-carbon metabolism; methanogenesis from dimethylamine. Its function is as follows. Catalyzes the transfer of a methyl group from dimethylamine to the corrinoid cofactor of MtbC. The protein is Dimethylamine methyltransferase MtbB3 (mtbB3) of Methanosarcina acetivorans (strain ATCC 35395 / DSM 2834 / JCM 12185 / C2A).